The primary structure comprises 482 residues: Alanine aminotransferase 2 (482 aa).

K299 is modified (N6-(pyridoxal phosphate)lysine).

This sequence belongs to the class-I pyridoxal-phosphate-dependent aminotransferase family. Alanine aminotransferase subfamily. In terms of assembly, homodimer. Pyridoxal 5'-phosphate serves as cofactor. In terms of processing, the N-terminus is blocked. In terms of tissue distribution, mesophyll and bundle sheath cells.

It catalyses the reaction L-alanine + 2-oxoglutarate = pyruvate + L-glutamate. Its pathway is photosynthesis; C4 acid pathway. It functions in the pathway amino-acid degradation; L-alanine degradation via transaminase pathway; pyruvate from L-alanine: step 1/1. Functionally, transfer of C3 units between the cytosol of mesophyll and bundle sheath cells to maintain a nitrogen-carbon balance in the C4-dicarboxylic pathway. The polypeptide is Alanine aminotransferase 2 (Panicum miliaceum (Proso millet)).